We begin with the raw amino-acid sequence, 432 residues long: 3-phosphoshikimate 1-carboxyvinyltransferase (432 aa).

3-phosphoshikimate contacts are provided by Lys-22, Ser-23, and Arg-27. Lys-22 is a binding site for phosphoenolpyruvate. The phosphoenolpyruvate site is built by Gly-96 and Arg-127. Residues Ser-173, Ser-174, Gln-175, Ser-201, Asp-316, Asn-339, and Lys-343 each coordinate 3-phosphoshikimate. Gln-175 provides a ligand contact to phosphoenolpyruvate. Asp-316 acts as the Proton acceptor in catalysis. 3 residues coordinate phosphoenolpyruvate: Arg-347, Arg-391, and Lys-416.

The protein belongs to the EPSP synthase family. As to quaternary structure, monomer.

The protein localises to the cytoplasm. The enzyme catalyses 3-phosphoshikimate + phosphoenolpyruvate = 5-O-(1-carboxyvinyl)-3-phosphoshikimate + phosphate. Its pathway is metabolic intermediate biosynthesis; chorismate biosynthesis; chorismate from D-erythrose 4-phosphate and phosphoenolpyruvate: step 6/7. In terms of biological role, catalyzes the transfer of the enolpyruvyl moiety of phosphoenolpyruvate (PEP) to the 5-hydroxyl of shikimate-3-phosphate (S3P) to produce enolpyruvyl shikimate-3-phosphate and inorganic phosphate. This Haemophilus influenzae (strain 86-028NP) protein is 3-phosphoshikimate 1-carboxyvinyltransferase.